Here is a 379-residue protein sequence, read N- to C-terminus: Sulfate adenylyltransferase (379 aa).

This sequence belongs to the sulfate adenylyltransferase family.

It catalyses the reaction sulfate + ATP + H(+) = adenosine 5'-phosphosulfate + diphosphate. The protein operates within sulfur metabolism; hydrogen sulfide biosynthesis; sulfite from sulfate: step 1/3. This Pyrococcus abyssi (strain GE5 / Orsay) protein is Sulfate adenylyltransferase (sat).